The primary structure comprises 251 residues: Triosephosphate isomerase (251 aa).

9-11 is a binding site for substrate; that stretch reads NWK. The active-site Electrophile is the His95. The Proton acceptor role is filled by Glu167. Residues Gly173, Ser212, and 233-234 contribute to the substrate site; that span reads GG.

The protein belongs to the triosephosphate isomerase family. In terms of assembly, homodimer.

The protein resides in the cytoplasm. It catalyses the reaction D-glyceraldehyde 3-phosphate = dihydroxyacetone phosphate. The protein operates within carbohydrate biosynthesis; gluconeogenesis. It participates in carbohydrate degradation; glycolysis; D-glyceraldehyde 3-phosphate from glycerone phosphate: step 1/1. Involved in the gluconeogenesis. Catalyzes stereospecifically the conversion of dihydroxyacetone phosphate (DHAP) to D-glyceraldehyde-3-phosphate (G3P). The polypeptide is Triosephosphate isomerase (Pseudomonas syringae pv. syringae (strain B728a)).